The sequence spans 1146 residues: DNA polymerase II large subunit (1146 aa).

It belongs to the archaeal DNA polymerase II family. In terms of assembly, heterodimer of a large subunit and a small subunit.

It catalyses the reaction DNA(n) + a 2'-deoxyribonucleoside 5'-triphosphate = DNA(n+1) + diphosphate. The enzyme catalyses Exonucleolytic cleavage in the 3'- to 5'-direction to yield nucleoside 5'-phosphates.. Functionally, possesses two activities: a DNA synthesis (polymerase) and an exonucleolytic activity that degrades single-stranded DNA in the 3'- to 5'-direction. Has a template-primer preference which is characteristic of a replicative DNA polymerase. The chain is DNA polymerase II large subunit from Methanosarcina barkeri (strain Fusaro / DSM 804).